The primary structure comprises 789 residues: E3 UFM1-protein ligase 1 (789 aa).

The required for E3 UFM1-protein ligase activity stretch occupies residues 2 to 212 (AADWEEIRRL…VSNLITRYGF (211 aa)). Disordered stretches follow at residues 407–470 (LENS…TGRN) and 743–763 (SKKA…ADTI). Over residues 444 to 453 (KIKKTKKKGR) the composition is skewed to basic residues. Residues 748–760 (QEDDNKTEEEEGA) show a composition bias toward acidic residues.

This sequence belongs to the UFL1 family. As to quaternary structure, catalytic component of the UFM1 ribosome E3 ligase (UREL) complex. Interacts with E2-like enzyme UFC1.

Its subcellular location is the endoplasmic reticulum membrane. It is found in the cytoplasm. The protein resides in the cytosol. The protein localises to the nucleus. It localises to the chromosome. E3 protein ligase that mediates ufmylation, the covalent attachment of the ubiquitin-like modifier UFM1 to lysine residues on target proteins, and which plays a key role in various processes, such as ribosome recycling, response to DNA damage, interferon response or reticulophagy (also called ER-phagy). As part of the UREL complex, plays a key role in ribosome recycling by catalyzing mono-ufmylation of RPL26/uL24 subunit of the 60S ribosome. Ufmylation of RPL26/uL24 occurs on free 60S ribosomes following ribosome dissociation: it weakens the junction between post-termination 60S subunits and SEC61 translocons, promoting release and recycling of the large ribosomal subunit from the endoplasmic reticulum membrane. Ufmylation of RPL26/uL24 and subsequent 60S ribosome recycling either take place after normal termination of translation or after ribosome stalling during cotranslational translocation at the endoplasmic reticulum. Involved in reticulophagy in response to endoplasmic reticulum stress by mediating ufmylation of proteins such as CYB5R3 and RPN1, thereby promoting lysosomal degradation of ufmylated proteins. Ufmylation in response to endoplasmic reticulum stress is essential for processes such as hematopoiesis, blood vessel morphogenesis or inflammatory response. The sequence is that of E3 UFM1-protein ligase 1 from Gallus gallus (Chicken).